Here is a 1041-residue protein sequence, read N- to C-terminus: Putative transcription elongation factor SPT5 homolog 1 (1041 aa).

The interval M1 to R133 is disordered. Composition is skewed to acidic residues over residues E7–E32, D53–Y69, and D99–I114. A Phosphoserine modification is found at S59. Residues P122–R133 show a composition bias toward basic and acidic residues. KOW domains are found at residues D273–V300, H425–E452, Y477–H504, and V601–G628. Disordered regions lie at residues N662–S713 and D768–L921. The span at G691 to H703 shows a compositional bias: gly residues. One can recognise a KOW 5 domain in the interval D712–N739. Positions D804–A814 are enriched in basic and acidic residues. Composition is skewed to polar residues over residues S835–P844 and T893–S904. Positions P988–S1015 constitute a KOW 6 domain.

Belongs to the SPT5 family.

It is found in the nucleus. May regulate transcription elongation by RNA polymerase II. May enhance transcriptional pausing at sites proximal to the promoter, which may in turn facilitate the assembly of an elongation competent RNA polymerase II complex. This is Putative transcription elongation factor SPT5 homolog 1 from Arabidopsis thaliana (Mouse-ear cress).